The primary structure comprises 516 residues: GPI mannosyltransferase 4 (516 aa).

Residues 1-5 lie on the Lumenal side of the membrane; sequence MMRYQ. Residues 6-26 form a helical membrane-spanning segment; it reads WWLYLVYAIGLMLCLGPSYIH. At 27-60 the chain is on the cytoplasmic side; that stretch reads PDEHFQCIEILAMQFMKVKGTIPWEFKSKFAARS. The chain crosses the membrane as a helical span at residues 61–81; the sequence is YGPLLLVYGPLFTILESFPEI. Topologically, residues 82 to 175 are lumenal; it reads QDNPALILYS…IQRSNFKNSV (94 aa). The chain crosses the membrane as a helical span at residues 176–196; it reads ILGLIFSFGVFNRVTFPAFIF. Topologically, residues 197–210 are cytoplasmic; the sequence is LPCLILFWKFYRVH. A helical membrane pass occupies residues 211 to 231; the sequence is WKSFSLLLLSFSFSSCLFVLI. Residues 232–270 are Lumenal-facing; that stretch reads DTNIYNNGKGFVITPLNNLKYNLNVQNLQVHGLHPRYTH. A helical transmembrane segment spans residues 271–291; that stretch reads LLVNLPQIVGPVLLLAIFSGY. Over 292–295 the chain is Cytoplasmic; that stretch reads KLDK. A helical membrane pass occupies residues 296-316; the sequence is LSTYAIISGLLFLSFFQHQEL. Arg-317 is a topological domain (lumenal). Residues 318–338 form a helical membrane-spanning segment; it reads FLVPLVPLLVTNLNWTPLSST. The Cytoplasmic segment spans residues 339–348; that stretch reads LVNKKIFKGT. A helical membrane pass occupies residues 349–369; that stretch reads WLLFNIIMAFIMGISHQAGII. The Lumenal segment spans residues 370-516; it reads QFLGDYFHFR…GLTVYSIELL (147 aa). N-linked (GlcNAc...) asparagine glycans are attached at residues Asn-403 and Asn-452.

It belongs to the glycosyltransferase 22 family. PIGZ subfamily.

It localises to the endoplasmic reticulum membrane. Its pathway is glycolipid biosynthesis; glycosylphosphatidylinositol-anchor biosynthesis. In terms of biological role, alpha-1,2-mannosyltransferase involved in glycosylphosphatidylinositol-anchor biosynthesis. Transfers a fourth mannose to trimannosyl-GPIs during GPI precursor assembly. The presence of a fourth mannose in GPI is essential in fungi. Involved in plasmid maintenance with SMP2. The polypeptide is GPI mannosyltransferase 4 (SMP3) (Saccharomyces cerevisiae (strain ATCC 204508 / S288c) (Baker's yeast)).